A 524-amino-acid chain; its full sequence is GMP synthase [glutamine-hydrolyzing] (524 aa).

Positions 9-207 (RILILDFGSQ…VIHICQCIPN (199 aa)) constitute a Glutamine amidotransferase type-1 domain. The active-site Nucleophile is C86. Catalysis depends on residues H181 and E183. The GMPS ATP-PPase domain maps to 208-399 (WTTKHIIEDS…LGLPADLIYR (192 aa)). Residue 235 to 241 (SGGVDSA) coordinates ATP.

As to quaternary structure, homodimer.

It carries out the reaction XMP + L-glutamine + ATP + H2O = GMP + L-glutamate + AMP + diphosphate + 2 H(+). The protein operates within purine metabolism; GMP biosynthesis; GMP from XMP (L-Gln route): step 1/1. Its function is as follows. Catalyzes the synthesis of GMP from XMP. This chain is GMP synthase [glutamine-hydrolyzing], found in Coxiella burnetii (strain CbuG_Q212) (Coxiella burnetii (strain Q212)).